The chain runs to 341 residues: NADH-ubiquinone oxidoreductase chain 2 (341 aa).

Helical transmembrane passes span 8–28, 60–80, 95–115, 121–141, 146–166, 195–215, 238–258, 273–293, and 321–341; these read ILFITIMIIGTLITVTSNSWL, YFLTQVLASTVLLFSSILLML, MIIMSALLLKSGAAPFHFWFP, LTWMNALMLMTWQKIAPLMLI, IKYLLLISVILSVIIGAIGGL, SIWLIYFFFYSFLSFVLTFMF, FTLFMNFLSLGGLPPFLGFLP, FMLTLMMMSTLITLFFYLRIC, and MIMTFFSIFGLFLISLFYFMF.

The protein belongs to the complex I subunit 2 family.

Its subcellular location is the mitochondrion inner membrane. The catalysed reaction is a ubiquinone + NADH + 5 H(+)(in) = a ubiquinol + NAD(+) + 4 H(+)(out). Core subunit of the mitochondrial membrane respiratory chain NADH dehydrogenase (Complex I) that is believed to belong to the minimal assembly required for catalysis. Complex I functions in the transfer of electrons from NADH to the respiratory chain. The immediate electron acceptor for the enzyme is believed to be ubiquinone. The sequence is that of NADH-ubiquinone oxidoreductase chain 2 (mt:ND2) from Drosophila melanogaster (Fruit fly).